A 93-amino-acid polypeptide reads, in one-letter code: Alpha-defensin 26 (93 aa).

A signal peptide spans 1 to 19 (MKTLVLLSALFLLAFQVQA). Positions 20–58 (DPIQNTDEETNTEVQPQEEDQAVSVSFGNPEGSDLQEES) are excised as a propeptide. The interval 24–55 (NTDEETNTEVQPQEEDQAVSVSFGNPEGSDLQ) is disordered. The segment covering 25 to 40 (TDEETNTEVQPQEEDQ) has biased composition (acidic residues). 3 cysteine pairs are disulfide-bonded: Cys64-Cys92, Cys66-Cys81, and Cys71-Cys91.

Belongs to the alpha-defensin family.

The protein resides in the secreted. Its function is as follows. May have microbicidal activities. The polypeptide is Alpha-defensin 26 (Defa26) (Mus musculus (Mouse)).